A 475-amino-acid chain; its full sequence is E3 ubiquitin-protein ligase TRIM62 (475 aa).

An RING-type zinc finger spans residues 11–54 (CSICLSIYQDPVSLGCEHYFCRRCITEHWVRQEAQGARDCPECR). The B box-type zinc finger occupies 88-128 (RAARPCQAHDKVKLFCLTDRALLCFFCDEPALHEQHQVTGI). Residues Cys-93, His-96, Cys-114, and His-120 each contribute to the Zn(2+) site. Residues 121–241 (EQHQVTGIDD…LQERLAETDR (121 aa)) adopt a coiled-coil conformation. Residues 277–475 (PLQYTIWKSL…QPLRINTVRI (199 aa)) form the B30.2/SPRY domain.

This sequence belongs to the TRIM/RBCC family. In terms of assembly, interacts with the ubiquitin-conjugating enzyme, UBE2D2. In terms of processing, polyubiquitinated, autoubiquitinated in the presence of UBE2D2.

It localises to the cytoplasm. It catalyses the reaction S-ubiquitinyl-[E2 ubiquitin-conjugating enzyme]-L-cysteine + [acceptor protein]-L-lysine = [E2 ubiquitin-conjugating enzyme]-L-cysteine + N(6)-ubiquitinyl-[acceptor protein]-L-lysine.. Its pathway is protein modification; protein ubiquitination. Its function is as follows. E3 ubiquitin ligase that plays a role in antifungal immunity by mediating 'Lys-27'-linked ubiquitination of CARD9 downstream of C-type lectin receptors; leading to CARD9 activation, followed by activation of NF-kappa-B and MAP kinase p38 pathways. E3 ubiquitin ligase activity is dependent on E2 ubiquitin-conjugating enzyme UBE2D2. The sequence is that of E3 ubiquitin-protein ligase TRIM62 from Mus musculus (Mouse).